A 328-amino-acid polypeptide reads, in one-letter code: Tryptophan--tRNA ligase (328 aa).

ATP is bound by residues 8-10 (RPT) and 16-17 (GH). Residues 9-17 (PTGKLHIGH) carry the 'HIGH' region motif. Position 136 (Asp-136) interacts with L-tryptophan. Residues 148–150 (GED), Leu-186, and 193–197 (KMSKS) contribute to the ATP site. The 'KMSKS' region motif lies at 193-197 (KMSKS).

This sequence belongs to the class-I aminoacyl-tRNA synthetase family. Homodimer.

It localises to the cytoplasm. The catalysed reaction is tRNA(Trp) + L-tryptophan + ATP = L-tryptophyl-tRNA(Trp) + AMP + diphosphate + H(+). Functionally, catalyzes the attachment of tryptophan to tRNA(Trp). The polypeptide is Tryptophan--tRNA ligase (Thermotoga maritima (strain ATCC 43589 / DSM 3109 / JCM 10099 / NBRC 100826 / MSB8)).